Reading from the N-terminus, the 340-residue chain is Ketol-acid reductoisomerase (NADP(+)) (340 aa).

Positions 1–182 constitute a KARI N-terminal Rossmann domain; it reads MRVYYDRDCD…GGGRSGIIET (182 aa). Residues 24–27, R48, S51, S53, and 83–86 each bind NADP(+); these read YGSQ and DELQ. The active site involves H108. Position 134 (G134) interacts with NADP(+). Positions 183-329 constitute a KARI C-terminal knotted domain; sequence NFREECETDL…ETLRGMMPWI (147 aa). D191, E195, E227, and E231 together coordinate Mg(2+). S252 contacts substrate.

Belongs to the ketol-acid reductoisomerase family. The cofactor is Mg(2+).

The catalysed reaction is (2R)-2,3-dihydroxy-3-methylbutanoate + NADP(+) = (2S)-2-acetolactate + NADPH + H(+). The enzyme catalyses (2R,3R)-2,3-dihydroxy-3-methylpentanoate + NADP(+) = (S)-2-ethyl-2-hydroxy-3-oxobutanoate + NADPH + H(+). Its pathway is amino-acid biosynthesis; L-isoleucine biosynthesis; L-isoleucine from 2-oxobutanoate: step 2/4. The protein operates within amino-acid biosynthesis; L-valine biosynthesis; L-valine from pyruvate: step 2/4. Involved in the biosynthesis of branched-chain amino acids (BCAA). Catalyzes an alkyl-migration followed by a ketol-acid reduction of (S)-2-acetolactate (S2AL) to yield (R)-2,3-dihydroxy-isovalerate. In the isomerase reaction, S2AL is rearranged via a Mg-dependent methyl migration to produce 3-hydroxy-3-methyl-2-ketobutyrate (HMKB). In the reductase reaction, this 2-ketoacid undergoes a metal-dependent reduction by NADPH to yield (R)-2,3-dihydroxy-isovalerate. This Roseobacter denitrificans (strain ATCC 33942 / OCh 114) (Erythrobacter sp. (strain OCh 114)) protein is Ketol-acid reductoisomerase (NADP(+)).